The chain runs to 249 residues: Phosphoribosylaminoimidazole-succinocarboxamide synthase (249 aa).

The protein belongs to the SAICAR synthetase family.

The catalysed reaction is 5-amino-1-(5-phospho-D-ribosyl)imidazole-4-carboxylate + L-aspartate + ATP = (2S)-2-[5-amino-1-(5-phospho-beta-D-ribosyl)imidazole-4-carboxamido]succinate + ADP + phosphate + 2 H(+). It participates in purine metabolism; IMP biosynthesis via de novo pathway; 5-amino-1-(5-phospho-D-ribosyl)imidazole-4-carboxamide from 5-amino-1-(5-phospho-D-ribosyl)imidazole-4-carboxylate: step 1/2. The protein is Phosphoribosylaminoimidazole-succinocarboxamide synthase of Roseiflexus castenholzii (strain DSM 13941 / HLO8).